The following is a 65-amino-acid chain: uncharacterized protein (65 aa).

This is an uncharacterized protein from Acheta domesticus (House cricket).